Consider the following 360-residue polypeptide: Peptide chain release factor 1 (360 aa).

Position 235 is an N5-methylglutamine (glutamine 235).

This sequence belongs to the prokaryotic/mitochondrial release factor family. Post-translationally, methylated by PrmC. Methylation increases the termination efficiency of RF1.

It is found in the cytoplasm. Peptide chain release factor 1 directs the termination of translation in response to the peptide chain termination codons UAG and UAA. The chain is Peptide chain release factor 1 from Bordetella parapertussis (strain 12822 / ATCC BAA-587 / NCTC 13253).